We begin with the raw amino-acid sequence, 160 residues long: Transcription elongation factor GreA 2 (160 aa).

Positions 9–73 form a coiled coil; that stretch reads MTEEGKVKLE…RIKTVEHMLQ (65 aa).

This sequence belongs to the GreA/GreB family.

Its function is as follows. Necessary for efficient RNA polymerase transcription elongation past template-encoded arresting sites. The arresting sites in DNA have the property of trapping a certain fraction of elongating RNA polymerases that pass through, resulting in locked ternary complexes. Cleavage of the nascent transcript by cleavage factors such as GreA or GreB allows the resumption of elongation from the new 3'terminus. GreA releases sequences of 2 to 3 nucleotides. The chain is Transcription elongation factor GreA 2 from Lactiplantibacillus plantarum (strain ATCC BAA-793 / NCIMB 8826 / WCFS1) (Lactobacillus plantarum).